The chain runs to 431 residues: Mannan endo-1,4-beta-mannosidase 5 (431 aa).

The signal sequence occupies residues 1 to 24 (MVPTRNRPMLRILGFFICAAFIYL). N-linked (GlcNAc...) asparagine glycosylation is present at asparagine 45. Tryptophan 97 contacts substrate. Asparagine 168 carries an N-linked (GlcNAc...) asparagine glycan. Substrate is bound at residue asparagine 213. The active-site Proton donor is the glutamate 214. A glycan (N-linked (GlcNAc...) asparagine) is linked at asparagine 282. Tyrosine 294 is a binding site for substrate. N-linked (GlcNAc...) asparagine glycosylation is present at asparagine 301. Glutamate 334 (nucleophile) is an active-site residue. Tryptophan 376 is a substrate binding site.

Belongs to the glycosyl hydrolase 5 (cellulase A) family. Expressed in stems.

It localises to the secreted. The catalysed reaction is Random hydrolysis of (1-&gt;4)-beta-D-mannosidic linkages in mannans, galactomannans and glucomannans.. This is Mannan endo-1,4-beta-mannosidase 5 (MAN5) from Arabidopsis thaliana (Mouse-ear cress).